A 467-amino-acid chain; its full sequence is MPLDAAPVDPASRGPVSAFEPPSSHGADDDDDHRTNASKELFGLKRRVVITGVGVRAPGGNGTRQFWELLTSGRTATRRISFFDPSPYRSQVAAEADFDPVAEGFGPRELDRMDRASQFAVACAREAFAASGLDPDTLDPARVGVSLGSAVAAATSLEREYLLLSDSGRDWEVDAAWLSRHMFDYLVPSVMPAEVAWAVGAEGPVTMVSTGCTSGLDSVGNAVRAIEEGSADVMFAGAADTPITPIVVACFDAIRATTARNDDPEHASRPFDGTRDGFVLAEGAAMFVLEDYDSALARGARIHAEISGYATRCNAYHMTGLKADGREMAETIRVALDESRTDATDIDYINAHGSGTRQNDRHETAAYKRALGEHARRTPVSSIKSMVGHSLGAIGSLEIAACVLALEHGVVPPTANLRTSDPECDLDYVPLEARERKLRSVLTVGSGFGGFQSAMVLRDAETAGAAA.

A disordered region spans residues 1 to 35 (MPLDAAPVDPASRGPVSAFEPPSSHGADDDDDHRT). The Ketosynthase family 3 (KS3) domain occupies 45 to 459 (KRRVVITGVG…GFQSAMVLRD (415 aa)). Catalysis depends on for beta-ketoacyl synthase activity residues cysteine 212, histidine 352, and histidine 389.

The protein belongs to the thiolase-like superfamily. Beta-ketoacyl-ACP synthases family.

The protein operates within antibiotic biosynthesis; actinorhodin biosynthesis. This chain is Actinorhodin polyketide putative beta-ketoacyl synthase 1, found in Streptomyces coelicolor (strain ATCC BAA-471 / A3(2) / M145).